Consider the following 626-residue polypeptide: Glucoamylase (626 aa).

The first 19 residues, methionine 1 to glycine 19, serve as a signal peptide directing secretion. The propeptide occupies leucine 20–arginine 35. N-linked (GlcNAc...) asparagine glycosylation is present at asparagine 106. Tryptophan 155 is a substrate binding site. Asparagine 206 carries an N-linked (GlcNAc...) asparagine glycan. Aspartate 211 (proton acceptor) is an active-site residue. Glutamate 214 (proton donor) is an active-site residue. The N-linked (GlcNAc...) asparagine glycan is linked to asparagine 217. The CBM20 domain occupies cysteine 520–arginine 626.

Belongs to the glycosyl hydrolase 15 family.

The enzyme catalyses Hydrolysis of terminal (1-&gt;4)-linked alpha-D-glucose residues successively from non-reducing ends of the chains with release of beta-D-glucose.. This Neurospora crassa (strain ATCC 24698 / 74-OR23-1A / CBS 708.71 / DSM 1257 / FGSC 987) protein is Glucoamylase (gla-1).